The primary structure comprises 516 residues: RNA-binding region-containing protein 3 (516 aa).

Disordered stretches follow at residues 1 to 27, 106 to 130, 210 to 254, and 264 to 283; these read MAAP…RGDR, VHSP…DDKE, EDYM…DEDR, and ANLQ…RKKR. A Phosphoserine modification is found at serine 21. The RRM 1 domain maps to 27–102; that stretch reads RTLLVRHLPA…HTLVVEFAKE (76 aa). Serine 108 bears the Phosphoserine mark. Residues 115-130 are compositionally biased toward basic and acidic residues; sequence TEKKKRSDDPVEDDKE. A compositionally biased stretch (pro residues) spans 217 to 230; it reads APLPPTSPQPPEEP. Basic residues predominate over residues 269-283; it reads KRPKPIKQRHVRKKR. The 84-residue stretch at 419 to 502 folds into the RRM 2 domain; the sequence is CRIYVKNLAK…KPMVVQFARS (84 aa).

In terms of assembly, component of the U11/U12 snRNPs that are part of the U12-type spliceosome. Found in a complex with m(7)G-capped U12 snRNA. Interacts with PDCD7.

It is found in the nucleus. In terms of biological role, participates in pre-mRNA U12-dependent splicing, performed by the minor spliceosome which removes U12-type introns. U12-type introns comprises less than 1% of all non-coding sequences. Binds to the 3'-stem-loop of m(7)G-capped U12 snRNA. This Bos taurus (Bovine) protein is RNA-binding region-containing protein 3 (RNPC3).